The following is a 431-amino-acid chain: 3-phosphoshikimate 1-carboxyvinyltransferase (431 aa).

3-phosphoshikimate contacts are provided by Lys21, Ser22, and Arg26. Lys21 is a phosphoenolpyruvate binding site. Gly93 and Arg122 together coordinate phosphoenolpyruvate. 3-phosphoshikimate is bound by residues Ser167, Gln169, Asp318, and Lys345. Phosphoenolpyruvate is bound at residue Gln169. The Proton acceptor role is filled by Asp318. Phosphoenolpyruvate-binding residues include Arg349 and Arg391.

The protein belongs to the EPSP synthase family. Monomer.

It localises to the cytoplasm. It carries out the reaction 3-phosphoshikimate + phosphoenolpyruvate = 5-O-(1-carboxyvinyl)-3-phosphoshikimate + phosphate. It participates in metabolic intermediate biosynthesis; chorismate biosynthesis; chorismate from D-erythrose 4-phosphate and phosphoenolpyruvate: step 6/7. In terms of biological role, catalyzes the transfer of the enolpyruvyl moiety of phosphoenolpyruvate (PEP) to the 5-hydroxyl of shikimate-3-phosphate (S3P) to produce enolpyruvyl shikimate-3-phosphate and inorganic phosphate. This is 3-phosphoshikimate 1-carboxyvinyltransferase from Roseiflexus castenholzii (strain DSM 13941 / HLO8).